The sequence spans 323 residues: Methionyl-tRNA formyltransferase (323 aa).

115-118 provides a ligand contact to (6S)-5,6,7,8-tetrahydrofolate; that stretch reads SLLP.

Belongs to the Fmt family.

The enzyme catalyses L-methionyl-tRNA(fMet) + (6R)-10-formyltetrahydrofolate = N-formyl-L-methionyl-tRNA(fMet) + (6S)-5,6,7,8-tetrahydrofolate + H(+). Functionally, attaches a formyl group to the free amino group of methionyl-tRNA(fMet). The formyl group appears to play a dual role in the initiator identity of N-formylmethionyl-tRNA by promoting its recognition by IF2 and preventing the misappropriation of this tRNA by the elongation apparatus. This is Methionyl-tRNA formyltransferase from Blochmanniella floridana.